We begin with the raw amino-acid sequence, 231 residues long: tRNA (guanine-N(7)-)-methyltransferase (231 aa).

S-adenosyl-L-methionine-binding residues include Glu-62, Glu-87, Asp-114, and Asp-137. Residue Asp-137 is part of the active site. Substrate is bound by residues Lys-141, Asp-173, and 210–213 (TKFE).

It belongs to the class I-like SAM-binding methyltransferase superfamily. TrmB family.

It carries out the reaction guanosine(46) in tRNA + S-adenosyl-L-methionine = N(7)-methylguanosine(46) in tRNA + S-adenosyl-L-homocysteine. It participates in tRNA modification; N(7)-methylguanine-tRNA biosynthesis. Catalyzes the formation of N(7)-methylguanine at position 46 (m7G46) in tRNA. The chain is tRNA (guanine-N(7)-)-methyltransferase from Methylococcus capsulatus (strain ATCC 33009 / NCIMB 11132 / Bath).